Consider the following 481-residue polypeptide: Glutamine synthetase (481 aa).

The GS beta-grasp domain maps to 22-106; the sequence is NEVEFVDFRF…VFCDVYDVYK (85 aa). The 368-residue stretch at 114-481 folds into the GS catalytic domain; it reads PRSIAKKALK…PFEFITTYSC (368 aa). Mg(2+) is bound by residues glutamate 139, glutamate 141, glutamate 223, and glutamate 230. L-glutamate-binding positions include 274-275 and glycine 275; that span reads NG. Histidine 279 serves as a coordination point for Mg(2+). ATP is bound by residues 281-283 and serine 283; that span reads HVS. Residues arginine 331, glutamate 337, and arginine 349 each coordinate L-glutamate. ATP is bound by residues arginine 349 and arginine 354. Glutamate 367 lines the Mg(2+) pocket. Residue arginine 369 coordinates L-glutamate.

This sequence belongs to the glutamine synthetase family. As to quaternary structure, oligomer of 12 subunits arranged in the form of two hexameric ring. Mg(2+) is required as a cofactor.

The protein resides in the cytoplasm. It catalyses the reaction L-glutamate + NH4(+) + ATP = L-glutamine + ADP + phosphate + H(+). Its activity is regulated as follows. The activity of this enzyme could be controlled by adenylation under conditions of abundant glutamine. Its function is as follows. Catalyzes the ATP-dependent biosynthesis of glutamine from glutamate and ammonia. The chain is Glutamine synthetase from Helicobacter pylori (strain J99 / ATCC 700824) (Campylobacter pylori J99).